Reading from the N-terminus, the 315-residue chain is HVA22-like protein h (315 aa).

Residues 148–315 (PKPKPKEKKQ…RKARSAGAPR (168 aa)) are disordered. Polar residues predominate over residues 173 to 190 (ATSQAASSNPQVRLQSKK). A compositionally biased stretch (pro residues) spans 234–248 (PPGPPPPPPPPPPSP).

The protein belongs to the DP1 family.

The polypeptide is HVA22-like protein h (HVA22H) (Arabidopsis thaliana (Mouse-ear cress)).